The primary structure comprises 116 residues: Somatostatin (116 aa).

The first 24 residues, 1 to 24 (MLSCRLQCALAALSIVLALGGVTG), serve as a signal peptide directing secretion. A propeptide spanning residues 25 to 88 (APSDPRLRQF…QDEMRLELQR (64 aa)) is cleaved from the precursor. An Alanine amide modification is found at alanine 43. Positions 62–99 (QTENDALEPEDLSQAAEQDEMRLELQRSANSNPAMAPR) are disordered. The cysteines at positions 105 and 116 are disulfide-linked.

The protein belongs to the somatostatin family. In terms of processing, C-terminal amidation of the neuronostatin peptide is required for its biological activity, including for the regulation of mean arterial pressure. Expressed in the pancreas and the spleen (at protein level).

It localises to the secreted. Functionally, inhibits the secretion of pituitary hormones, including that of growth hormone/somatotropin (GH1), PRL, ACTH, luteinizing hormone (LH) and TSH. Also impairs ghrelin- and GnRH-stimulated secretion of GH1 and LH; the inhibition of ghrelin-stimulated secretion of GH1 can be further increased by neuronostatin. Its function is as follows. May enhance low-glucose-induced glucagon release by pancreatic alpha cells. This effect may be mediated by binding to GPR107 and PKA activation. May regulate cardiac contractile function. May compromise cardiomyocyte viability. In the central nervous system, may impair memory retention and may affect hippocampal excitability. May also have anxiolytic and anorexigenic effects. May play a role in arterial pressure regulation. May inhibit basal, but not ghrelin- or GnRH-stimulated secretion of GH1 or LH, but does not affect the release of other pituitary hormones, including PRL, ACTH, FSH or TSH. Potentiates inhibitory action of somatostatin on ghrelin-stimulated secretion of GH1, but not that on GnRH-stimulated secretion of LH. The sequence is that of Somatostatin (SST) from Sus scrofa (Pig).